Here is a 627-residue protein sequence, read N- to C-terminus: Pro-interleukin-16 (627 aa).

Disordered stretches follow at residues 34–136, 162–267, and 316–337; these read HMPL…SIKQ, SSGE…LTRS, and GASP…ETSG. Phosphoserine is present on serine 217. Residues 318–337 show a composition bias toward polar residues; it reads SPTSLSNEDSAANGCAETSG. The segment at 401–497 is interaction with PPP1R12A, PPP1R12B and PPP1R12C; sequence KQLDSIHVTI…IVTRKLTPET (97 aa). PDZ domains follow at residues 407 to 492 and 529 to 614; these read HVTI…VTRK and TVTL…IKRK.

As to quaternary structure, homotetramer. Pro-interleukin-16 interacts (via PDZ 2 domain) with PPP1R12A, PPP1R12B and PPP1R12C. Pro-interleukin-16 interacts with GRIN2A. Pro-interleukin-16 interacts with GABPB1. Pro-interleukin-16 interacts (via PDZ 3 domain) with HDAC3.

It localises to the secreted. Its subcellular location is the cytoplasm. It is found in the nucleus. Interleukin-16 stimulates a migratory response in CD4+ lymphocytes, monocytes, and eosinophils. Primes CD4+ T-cells for IL-2 and IL-15 responsiveness. Also induces T-lymphocyte expression of interleukin 2 receptor. Ligand for CD4. Functionally, pro-interleukin-16 is involved in cell cycle progression in T-cells. Appears to be involved in transcriptional regulation of SKP2 and is probably part of a transcriptional repression complex on the core promoter of the SKP2 gene. May act as a scaffold for GABPB1 (the DNA-binding subunit the GABP transcription factor complex) and HDAC3 thus maintaining transcriptional repression and blocking cell cycle progression in resting T-cells. In Saimiri sciureus (Common squirrel monkey), this protein is Pro-interleukin-16 (IL16).